Reading from the N-terminus, the 499-residue chain is Glycerol kinase (499 aa).

Residue Thr-13 participates in ADP binding. 3 residues coordinate ATP: Thr-13, Thr-14, and Ser-15. Thr-13 contributes to the sn-glycerol 3-phosphate binding site. An ADP-binding site is contributed by Arg-17. Sn-glycerol 3-phosphate is bound by residues Arg-83, Glu-84, Tyr-135, and Asp-244. Positions 83, 84, 135, 244, and 245 each coordinate glycerol. Residues Thr-266 and Gly-309 each coordinate ADP. Thr-266, Gly-309, Gln-313, and Gly-410 together coordinate ATP. ADP is bound by residues Gly-410 and Asn-414.

This sequence belongs to the FGGY kinase family. Homotetramer and homodimer (in equilibrium).

It catalyses the reaction glycerol + ATP = sn-glycerol 3-phosphate + ADP + H(+). It functions in the pathway polyol metabolism; glycerol degradation via glycerol kinase pathway; sn-glycerol 3-phosphate from glycerol: step 1/1. Its activity is regulated as follows. Activated by phosphorylation and inhibited by fructose 1,6-bisphosphate (FBP). Its function is as follows. Key enzyme in the regulation of glycerol uptake and metabolism. Catalyzes the phosphorylation of glycerol to yield sn-glycerol 3-phosphate. The protein is Glycerol kinase of Brevibacillus brevis (strain 47 / JCM 6285 / NBRC 100599).